The primary structure comprises 261 residues: Aquaporin-8 (261 aa).

The Cytoplasmic portion of the chain corresponds to 1–36; it reads MSGEQTPMCSMDLPEVKVKTSMAGRCRVFWYEQYVQ. The chain crosses the membrane as a helical span at residues 37–57; sequence PCIVELVGSALFIFIGCLSVI. C53 is modified (cysteine persulfide). C53 bears the Cysteine sulfenic acid (-SOH) mark. Residues 58-84 are Extracellular-facing; that stretch reads ENSPNTGLLQPALAHGLALGLIIATLG. Residues 85–105 traverse the membrane as a helical segment; that stretch reads NISGGHFNPAVSLAVTVIGGL. The NPA 1 signature appears at 92–94; that stretch reads NPA. At 106–107 the chain is on the cytoplasmic side; it reads KT. A helical membrane pass occupies residues 108–128; sequence MLLIPYWISQLFGGLIGAALA. The Extracellular segment spans residues 129 to 156; the sequence is KVVSPEERFWNASGAAFAIVQEQEQVAE. N139 carries an N-linked (GlcNAc...) asparagine glycan. Residues 157–177 traverse the membrane as a helical segment; it reads ALGIEIILTMLLVLAVCMGAV. Residues 178–183 are Cytoplasmic-facing; the sequence is NEKTMG. A helical membrane pass occupies residues 184–204; sequence PLAPFSIGFSVIVDILAGGSI. At 205-228 the chain is on the extracellular side; the sequence is SGACMNPARAFGPAVMAGYWDFHW. An NPA 2 motif is present at residues 210 to 212; the sequence is NPA. A helical membrane pass occupies residues 229-249; sequence IYWLGPLLAGLFVGLLIRLLI. Topologically, residues 250-261 are cytoplasmic; the sequence is GDEKTRLILKSR.

It belongs to the MIP/aquaporin (TC 1.A.8) family. In terms of processing, sulfenylation at Cys-53(C53-SOH) when hydrogen peroxide flows through the AQP8 channel, making it susceptible to hydrogen sulfide produced by CBS. Persulfidation at Cys-53 is required to gate AQP8 channel; under stress condition, hydrogen peroxide accumulates in the cell leading to CBS activation that produces hydrogen sulfide inducing persulfidation of oxidized Cys-53 (C53-SOH). Post-translationally, N-glycosylated. In terms of tissue distribution, expressed in placenta. Highly expressed in the epithelial layer of gall-bladders. Expressed in heart, kidney, submandibular gland, liver, small intestine, colon, testes, and epididymis. In testes, expressed in spermatogenic cells.

It is found in the cell membrane. Its subcellular location is the mitochondrion inner membrane. The protein localises to the apical cell membrane. The protein resides in the basolateral cell membrane. It localises to the smooth endoplasmic reticulum membrane. It carries out the reaction H2O(in) = H2O(out). It catalyses the reaction urea(in) = urea(out). The enzyme catalyses NH4(+)(in) = NH4(+)(out). The catalysed reaction is H2O2(out) = H2O2(in). It carries out the reaction formamide(out) = formamide(in). It catalyses the reaction methylamine(out) = methylamine(in). With respect to regulation, reversibly gated by a two-step sulfenylation-persulfidation process in cells undergoing diverse stresses. In terms of biological role, channel that allows the facilitated permeation of water and uncharged molecules, such as hydrogen peroxide and the neutral form of ammonia (NH3), through cellular membranes such as plasma membrane, inner mitochondrial membrane and endoplasmic reticulum membrane of several tissues. The transport of ammonia neutral form induces a parallel transport of proton, at alkaline pH when the concentration of ammonia is high. However, it is unclear whether the transport of proton takes place via the aquaporin or via an endogenous pathway. Also, may transport ammonia analogs such as formamide and methylamine, a transport favourited at basic pH due to the increase of unprotonated (neutral) form, which is expected to favor diffusion. In vitro, may be also permeable to urea but not to glycerol. Does not transport urea or glycerol. The water transport mechanism is mercury- and copper-sensitive and passive in response to osmotic driving forces. At the canicular plasma membrane, mediates the osmotic transport of water toward the bile canaliculus and facilitates the cAMP-induced bile canalicular water secretion, a process involved in bile formation. In addition, mediates the hydrogen peroxide release from hepatocyte mitochondria that modulates the SREBF2-mediated cholesterol synthesis and facilitates the mitochondrial ammonia uptake which is metabolized into urea, mainly under glucagon stimulation. In B cells, transports the CYBB-generated hydrogen peroxide from the external leaflet of the plasma membrane to the cytosol to promote B cell activation and differentiation for signal amplification. In the small intestine and colon system, mediates water transport through mitochondria and apical membrane of epithelial cells. May play an important role in the adaptive response of proximal tubule cells to acidosis possibly facilitating mitochondrial ammonia transport. This is Aquaporin-8 from Mus musculus (Mouse).